A 107-amino-acid chain; its full sequence is Regulatory protein SoxS (107 aa).

The region spanning Gln-8 to Arg-106 is the HTH araC/xylS-type domain. 2 DNA-binding regions (H-T-H motif) span residues Asp-25–Thr-46 and Ile-73–Phe-96.

Its subcellular location is the cytoplasm. Functionally, transcriptional activator of the superoxide response regulon of E.coli that includes at least 10 genes such as sodA, nfo, zwf and micF. Binds the DNA sequence 5'-GCACN(7)CAA-3'. It also facilitates the subsequent binding of RNA polymerase to the micF and the nfo promoters. The polypeptide is Regulatory protein SoxS (soxS) (Escherichia coli O157:H7).